We begin with the raw amino-acid sequence, 297 residues long: Translocase of chloroplast 33, chloroplastic (297 aa).

The AIG1-type G domain occupies M34–S258. Residues M37–V53 traverse the membrane as a helical segment. GTP contacts are provided by residues G46–S51 and S65–E70. Positions 50 and 68 each coordinate Mg(2+). 2 homodimerization regions span residues S65–Q68 and R125–R130. Residue H160 coordinates GTP. S181 bears the Phosphoserine mark. E208–N209 provides a ligand contact to GTP.

The protein belongs to the TRAFAC class TrmE-Era-EngA-EngB-Septin-like GTPase superfamily. AIG1/Toc34/Toc159-like paraseptin GTPase family. TOC34 subfamily. In terms of assembly, homodimer, heterodimer with TOC34 and TOC159, and monomer. The homodimerization and the dimerization with TOC159 require the binding of GTP on Arg-130, and a hypothetical coGAP factor. The dimeric form has a higher GTPase activity than the monomeric form. Part of the TOC core complex that includes 1 protein for the specific recognition of transit peptides surrounded by a ring composed of four proteins forming translocation channels, and four to five GTP-binding proteins providing energy. This core complex can interact with components of the TIC complex to form a larger import complex. Chloroplastic protein precursor such as prSS (precursor of the RuBisCO small subunit) interacts with these complexes. The TOC complex contains a specific subset of polar lipids such as digalactosyldiacylglyceride (DGDG), phosphatidylcholine (PC) and phosphatidylglycerol (PG). Interacts at least with TOC75-3. Forms large complexes including TOC33, pPORA and OEP161 during pPORA import into plastids at the plastid envelope membrane. Interacts with SP1. Mg(2+) is required as a cofactor. Post-translationally, phosphorylated by a kinase present in the outer envelope of chloroplast. When Ser-181 is phosphorylated, the binding to preprotein, GTP and GDP is inhibited, and thus, GTPase activity is repressed. As to expression, mostly expressed in seedlings and flowers, and, to a lower extent, in roots, stems, and leaves.

It localises to the plastid. It is found in the chloroplast outer membrane. Its function is as follows. GTPase involved in protein precursor import into chloroplasts. Seems to recognize chloroplast-destined precursor proteins and regulate their presentation to the translocation channel through GTP hydrolysis. Binds GTP, GDP, XTP, but not ATP. Probably specialized in the import of nuclear encoded photosynthetic preproteins from the cytoplasm to the chloroplast, especially during early development stages. The protein is Translocase of chloroplast 33, chloroplastic (TOC33) of Arabidopsis thaliana (Mouse-ear cress).